A 599-amino-acid polypeptide reads, in one-letter code: Elongation factor 4 (599 aa).

The tr-type G domain occupies 2–184 (KNIRNFSIIA…RLVRDIPPPQ (183 aa)). GTP contacts are provided by residues 14–19 (DHGKST) and 131–134 (NKID).

It belongs to the TRAFAC class translation factor GTPase superfamily. Classic translation factor GTPase family. LepA subfamily.

Its subcellular location is the cell inner membrane. The enzyme catalyses GTP + H2O = GDP + phosphate + H(+). Its function is as follows. Required for accurate and efficient protein synthesis under certain stress conditions. May act as a fidelity factor of the translation reaction, by catalyzing a one-codon backward translocation of tRNAs on improperly translocated ribosomes. Back-translocation proceeds from a post-translocation (POST) complex to a pre-translocation (PRE) complex, thus giving elongation factor G a second chance to translocate the tRNAs correctly. Binds to ribosomes in a GTP-dependent manner. The chain is Elongation factor 4 from Salmonella gallinarum (strain 287/91 / NCTC 13346).